The chain runs to 276 residues: Rhomboid protease GlpG (276 aa).

6 helical membrane passes run 94–114 (GPVT…MSLI), 142–162 (IFMH…WYLG), 169–189 (LGSG…GYVQ), 192–212 (FSGP…GYVW), 229–249 (LIIF…GMSM), and 250–270 (ANGA…VDTL). Residue serine 201 is the Nucleophile of the active site. The active site involves histidine 254.

This sequence belongs to the peptidase S54 family.

Its subcellular location is the cell inner membrane. It carries out the reaction Cleaves type-1 transmembrane domains using a catalytic dyad composed of serine and histidine that are contributed by different transmembrane domains.. In terms of biological role, rhomboid-type serine protease that catalyzes intramembrane proteolysis. The polypeptide is Rhomboid protease GlpG (Salmonella paratyphi A (strain ATCC 9150 / SARB42)).